The sequence spans 227 residues: Cytidylate kinase (227 aa).

ATP is bound at residue 12 to 20 (GPSGAGKGT).

Belongs to the cytidylate kinase family. Type 1 subfamily.

Its subcellular location is the cytoplasm. It carries out the reaction CMP + ATP = CDP + ADP. The catalysed reaction is dCMP + ATP = dCDP + ADP. The polypeptide is Cytidylate kinase (Shigella boydii serotype 4 (strain Sb227)).